We begin with the raw amino-acid sequence, 285 residues long: Phosphatidylserine decarboxylase proenzyme (285 aa).

Catalysis depends on charge relay system; for autoendoproteolytic cleavage activity residues Asp-89, His-146, and Ser-252. Ser-252 functions as the Schiff-base intermediate with substrate; via pyruvic acid; for decarboxylase activity in the catalytic mechanism. At Ser-252 the chain carries Pyruvic acid (Ser); by autocatalysis.

It belongs to the phosphatidylserine decarboxylase family. PSD-B subfamily. Prokaryotic type I sub-subfamily. Heterodimer of a large membrane-associated beta subunit and a small pyruvoyl-containing alpha subunit. It depends on pyruvate as a cofactor. Post-translationally, is synthesized initially as an inactive proenzyme. Formation of the active enzyme involves a self-maturation process in which the active site pyruvoyl group is generated from an internal serine residue via an autocatalytic post-translational modification. Two non-identical subunits are generated from the proenzyme in this reaction, and the pyruvate is formed at the N-terminus of the alpha chain, which is derived from the carboxyl end of the proenzyme. The autoendoproteolytic cleavage occurs by a canonical serine protease mechanism, in which the side chain hydroxyl group of the serine supplies its oxygen atom to form the C-terminus of the beta chain, while the remainder of the serine residue undergoes an oxidative deamination to produce ammonia and the pyruvoyl prosthetic group on the alpha chain. During this reaction, the Ser that is part of the protease active site of the proenzyme becomes the pyruvoyl prosthetic group, which constitutes an essential element of the active site of the mature decarboxylase.

It is found in the cell membrane. It carries out the reaction a 1,2-diacyl-sn-glycero-3-phospho-L-serine + H(+) = a 1,2-diacyl-sn-glycero-3-phosphoethanolamine + CO2. It participates in phospholipid metabolism; phosphatidylethanolamine biosynthesis; phosphatidylethanolamine from CDP-diacylglycerol: step 2/2. In terms of biological role, catalyzes the formation of phosphatidylethanolamine (PtdEtn) from phosphatidylserine (PtdSer). In Vibrio parahaemolyticus serotype O3:K6 (strain RIMD 2210633), this protein is Phosphatidylserine decarboxylase proenzyme.